A 214-amino-acid polypeptide reads, in one-letter code: Small ribosomal subunit protein uS5 (214 aa).

The region spanning 54 to 117 (LRYDIVDIGI…RDAKMRIIPV (64 aa)) is the S5 DRBM domain.

It belongs to the universal ribosomal protein uS5 family. As to quaternary structure, part of the 30S ribosomal subunit. Contacts protein S4.

Functionally, with S4 and S12 plays an important role in translational accuracy. The chain is Small ribosomal subunit protein uS5 from Sulfolobus acidocaldarius (strain ATCC 33909 / DSM 639 / JCM 8929 / NBRC 15157 / NCIMB 11770).